A 231-amino-acid chain; its full sequence is Large ribosomal subunit protein uL1 (231 aa).

The protein belongs to the universal ribosomal protein uL1 family. As to quaternary structure, part of the 50S ribosomal subunit.

In terms of biological role, binds directly to 23S rRNA. The L1 stalk is quite mobile in the ribosome, and is involved in E site tRNA release. Its function is as follows. Protein L1 is also a translational repressor protein, it controls the translation of the L11 operon by binding to its mRNA. The protein is Large ribosomal subunit protein uL1 of Chlorobaculum tepidum (strain ATCC 49652 / DSM 12025 / NBRC 103806 / TLS) (Chlorobium tepidum).